We begin with the raw amino-acid sequence, 126 residues long: Small ribosomal subunit protein uS13 (126 aa).

Residues 92–126 (HRRGLPVRGQRTKTNARTRKGPKKTVAGKKKATRK) are disordered.

It belongs to the universal ribosomal protein uS13 family. In terms of assembly, part of the 30S ribosomal subunit. Forms a loose heterodimer with protein S19. Forms two bridges to the 50S subunit in the 70S ribosome.

Functionally, located at the top of the head of the 30S subunit, it contacts several helices of the 16S rRNA. In the 70S ribosome it contacts the 23S rRNA (bridge B1a) and protein L5 of the 50S subunit (bridge B1b), connecting the 2 subunits; these bridges are implicated in subunit movement. Contacts the tRNAs in the A and P-sites. The chain is Small ribosomal subunit protein uS13 from Deinococcus deserti (strain DSM 17065 / CIP 109153 / LMG 22923 / VCD115).